Here is a 234-residue protein sequence, read N- to C-terminus: MSFRSSSTSPRSNKQTATKRFKQSGQAQSVGSPKRHSVKRKNNEQSKKSLSLAERKIIIFNKPYDTLSQFTDGEGRKTLADFIPVKEVYAAGRLDRDSEGLMVLTNDGILQAKLTQPKSKSPKTYWVQVEGAPTEAQLEPLRRGVELKDGLTLPAQVEIIQDPQLWERNPPVRFRAAIPTTWLAITIIEGRNRQVRRMTAHIGFPTLRLVRYSMGGMTLQDLQPGEWKEISLPS.

Positions 1–12 are enriched in low complexity; the sequence is MSFRSSSTSPRS. The interval 1–49 is disordered; it reads MSFRSSSTSPRSNKQTATKRFKQSGQAQSVGSPKRHSVKRKNNEQSKKS. The active-site Nucleophile is the aspartate 95.

The protein belongs to the pseudouridine synthase RsuA family.

It catalyses the reaction uridine(2457) in 23S rRNA = pseudouridine(2457) in 23S rRNA. Responsible for synthesis of pseudouridine from uracil-2457 in 23S ribosomal RNA. This is Ribosomal large subunit pseudouridine synthase E (rluE) from Vibrio vulnificus (strain CMCP6).